Consider the following 114-residue polypeptide: NAD(P)H-quinone oxidoreductase subunit M (114 aa).

Belongs to the complex I NdhM subunit family. As to quaternary structure, NDH-1 can be composed of about 15 different subunits; different subcomplexes with different compositions have been identified which probably have different functions.

It is found in the cellular thylakoid membrane. It carries out the reaction a plastoquinone + NADH + (n+1) H(+)(in) = a plastoquinol + NAD(+) + n H(+)(out). It catalyses the reaction a plastoquinone + NADPH + (n+1) H(+)(in) = a plastoquinol + NADP(+) + n H(+)(out). NDH-1 shuttles electrons from an unknown electron donor, via FMN and iron-sulfur (Fe-S) centers, to quinones in the respiratory and/or the photosynthetic chain. The immediate electron acceptor for the enzyme in this species is believed to be plastoquinone. Couples the redox reaction to proton translocation, and thus conserves the redox energy in a proton gradient. Cyanobacterial NDH-1 also plays a role in inorganic carbon-concentration. The sequence is that of NAD(P)H-quinone oxidoreductase subunit M from Acaryochloris marina (strain MBIC 11017).